Reading from the N-terminus, the 192-residue chain is Inosine triphosphate pyrophosphatase (192 aa).

ITP is bound at residue 10 to 15 (TGNANK). Residue Glu46 coordinates Mg(2+). ITP is bound by residues Lys58, 74-75 (DT), Lys91, 149-152 (FGWD), Lys172, and 177-178 (HR).

The protein belongs to the HAM1 NTPase family. As to quaternary structure, homodimer. The cofactor is Mg(2+). It depends on Mn(2+) as a cofactor.

Its subcellular location is the cytoplasm. It is found in the nucleus. It carries out the reaction ITP + H2O = IMP + diphosphate + H(+). The enzyme catalyses dITP + H2O = dIMP + diphosphate + H(+). It catalyses the reaction XTP + H2O = XMP + diphosphate + H(+). Functionally, pyrophosphatase that hydrolyzes non-canonical purine nucleotides such as inosine triphosphate (ITP), deoxyinosine triphosphate (dITP) or xanthosine 5'-triphosphate (XTP) to their respective monophosphate derivatives. The enzyme does not distinguish between the deoxy- and ribose forms. Probably excludes non-canonical purines from RNA and DNA precursor pools, thus preventing their incorporation into RNA and DNA and avoiding chromosomal lesions. The polypeptide is Inosine triphosphate pyrophosphatase (Puccinia graminis f. sp. tritici (strain CRL 75-36-700-3 / race SCCL) (Black stem rust fungus)).